The primary structure comprises 175 residues: RNA pyrophosphohydrolase (175 aa).

One can recognise a Nudix hydrolase domain in the interval 6-149; that stretch reads GYRPNVGIVI…KRDVYRRVMK (144 aa). Positions 38-59 match the Nudix box motif; the sequence is GGINPGETAEQAMYRELFEEVG.

This sequence belongs to the Nudix hydrolase family. RppH subfamily. It depends on a divalent metal cation as a cofactor.

Its function is as follows. Accelerates the degradation of transcripts by removing pyrophosphate from the 5'-end of triphosphorylated RNA, leading to a more labile monophosphorylated state that can stimulate subsequent ribonuclease cleavage. This Serratia proteamaculans (strain 568) protein is RNA pyrophosphohydrolase.